The sequence spans 1238 residues: DNA-directed RNA polymerase subunit beta (1238 aa).

The protein belongs to the RNA polymerase beta chain family. The RNAP catalytic core consists of 2 alpha, 1 beta, 1 beta' and 1 omega subunit. When a sigma factor is associated with the core the holoenzyme is formed, which can initiate transcription.

The enzyme catalyses RNA(n) + a ribonucleoside 5'-triphosphate = RNA(n+1) + diphosphate. Its function is as follows. DNA-dependent RNA polymerase catalyzes the transcription of DNA into RNA using the four ribonucleoside triphosphates as substrates. This chain is DNA-directed RNA polymerase subunit beta, found in Clostridioides difficile (strain 630) (Peptoclostridium difficile).